Here is a 474-residue protein sequence, read N- to C-terminus: Serine/threonine-protein kinase ksp1 (474 aa).

The region spanning 9 to 280 (YKVERPLNKG…EAVLAVTKWT (272 aa)) is the Protein kinase domain. ATP-binding positions include 15–23 (LNKGSYGTV) and K43. Residue D137 is the Proton acceptor of the active site. The tract at residues 345 to 373 (VDENISTSSSPRSPASLAPVNNSERSYDS) is disordered. Over residues 350-363 (STSSSPRSPASLAP) the composition is skewed to low complexity. A phosphoserine mark is found at S353, S354, S357, S378, S404, and S413.

This sequence belongs to the protein kinase superfamily. Ser/Thr protein kinase family.

The protein resides in the cytoplasm. It is found in the nucleus. It catalyses the reaction L-seryl-[protein] + ATP = O-phospho-L-seryl-[protein] + ADP + H(+). The catalysed reaction is L-threonyl-[protein] + ATP = O-phospho-L-threonyl-[protein] + ADP + H(+). The protein is Serine/threonine-protein kinase ksp1 (ksp1) of Schizosaccharomyces pombe (strain 972 / ATCC 24843) (Fission yeast).